The following is a 322-amino-acid chain: Methionyl-tRNA formyltransferase (322 aa).

Residue 115–118 (SLLP) coordinates (6S)-5,6,7,8-tetrahydrofolate.

The protein belongs to the Fmt family.

The enzyme catalyses L-methionyl-tRNA(fMet) + (6R)-10-formyltetrahydrofolate = N-formyl-L-methionyl-tRNA(fMet) + (6S)-5,6,7,8-tetrahydrofolate + H(+). Its function is as follows. Attaches a formyl group to the free amino group of methionyl-tRNA(fMet). The formyl group appears to play a dual role in the initiator identity of N-formylmethionyl-tRNA by promoting its recognition by IF2 and preventing the misappropriation of this tRNA by the elongation apparatus. The protein is Methionyl-tRNA formyltransferase of Treponema denticola (strain ATCC 35405 / DSM 14222 / CIP 103919 / JCM 8153 / KCTC 15104).